The chain runs to 257 residues: MPLHRYPVHLWQKLRLRQGICARLPAHFLRSLEEERTPTPVHYKPHGTKFKINPKNGQRERVEDVPIPVHYPPESQQGLWGGEGLILGYRYANNDKLSKRVKKVWKPQLFTRELYSEILDKKFTVTVTMRTLDLIDEAYGFDFYILKTPKEDLGSKFGMDLKRGMLLRLARQDPHLHPENPERRAAIYDKYRSFVIPEAEAEWVGLTLEEALEKQRLLEEKDPVPLFKVYVEELVQRLQEQVLSRPAVVQKRAGDHA.

The transit peptide at 1-55 (MPLHRYPVHLWQKLRLRQGICARLPAHFLRSLEEERTPTPVHYKPHGTKFKINPK) directs the protein to the mitochondrion.

It belongs to the bacterial ribosomal protein bL28 family. As to quaternary structure, component of the mitochondrial ribosome large subunit (39S) which comprises a 16S rRNA and about 50 distinct proteins. Interacts with OXA1L.

It is found in the mitochondrion. This chain is Large ribosomal subunit protein bL28m (Mrpl28), found in Mus musculus (Mouse).